We begin with the raw amino-acid sequence, 435 residues long: NADH-quinone oxidoreductase subunit D (435 aa).

This sequence belongs to the complex I 49 kDa subunit family. NDH-1 is composed of 14 different subunits. Subunits NuoB, C, D, E, F, and G constitute the peripheral sector of the complex.

The protein resides in the cell membrane. The enzyme catalyses a quinone + NADH + 5 H(+)(in) = a quinol + NAD(+) + 4 H(+)(out). Its function is as follows. NDH-1 shuttles electrons from NADH, via FMN and iron-sulfur (Fe-S) centers, to quinones in the respiratory chain. The immediate electron acceptor for the enzyme in this species is believed to be ubiquinone. Couples the redox reaction to proton translocation (for every two electrons transferred, four hydrogen ions are translocated across the cytoplasmic membrane), and thus conserves the redox energy in a proton gradient. This chain is NADH-quinone oxidoreductase subunit D, found in Stenotrophomonas maltophilia (strain K279a).